A 597-amino-acid polypeptide reads, in one-letter code: Proline--tRNA ligase (597 aa).

This sequence belongs to the class-II aminoacyl-tRNA synthetase family. ProS type 1 subfamily. Homodimer.

It localises to the cytoplasm. It catalyses the reaction tRNA(Pro) + L-proline + ATP = L-prolyl-tRNA(Pro) + AMP + diphosphate. Catalyzes the attachment of proline to tRNA(Pro) in a two-step reaction: proline is first activated by ATP to form Pro-AMP and then transferred to the acceptor end of tRNA(Pro). As ProRS can inadvertently accommodate and process non-cognate amino acids such as alanine and cysteine, to avoid such errors it has two additional distinct editing activities against alanine. One activity is designated as 'pretransfer' editing and involves the tRNA(Pro)-independent hydrolysis of activated Ala-AMP. The other activity is designated 'posttransfer' editing and involves deacylation of mischarged Ala-tRNA(Pro). The misacylated Cys-tRNA(Pro) is not edited by ProRS. This Bifidobacterium longum (strain NCC 2705) protein is Proline--tRNA ligase.